Reading from the N-terminus, the 187-residue chain is Acireductone dioxygenase (187 aa).

Residues His87, His89, Glu93, and His136 each contribute to the Fe(2+) site. Residues His87, His89, Glu93, and His136 each coordinate Ni(2+).

This sequence belongs to the acireductone dioxygenase (ARD) family. Fe(2+) serves as cofactor. It depends on Ni(2+) as a cofactor.

Its subcellular location is the cytoplasm. The protein localises to the nucleus. It carries out the reaction 1,2-dihydroxy-5-(methylsulfanyl)pent-1-en-3-one + O2 = 4-methylsulfanyl-2-oxobutanoate + formate + 2 H(+). The enzyme catalyses 1,2-dihydroxy-5-(methylsulfanyl)pent-1-en-3-one + O2 = 3-(methylsulfanyl)propanoate + CO + formate + 2 H(+). Its pathway is amino-acid biosynthesis; L-methionine biosynthesis via salvage pathway; L-methionine from S-methyl-5-thio-alpha-D-ribose 1-phosphate: step 5/6. Its function is as follows. Catalyzes 2 different reactions between oxygen and the acireductone 1,2-dihydroxy-3-keto-5-methylthiopentene (DHK-MTPene) depending upon the metal bound in the active site. Fe-containing acireductone dioxygenase (Fe-ARD) produces formate and 2-keto-4-methylthiobutyrate (KMTB), the alpha-ketoacid precursor of methionine in the methionine recycle pathway. Ni-containing acireductone dioxygenase (Ni-ARD) produces methylthiopropionate, carbon monoxide and formate, and does not lie on the methionine recycle pathway. In Cryptococcus neoformans var. neoformans serotype D (strain JEC21 / ATCC MYA-565) (Filobasidiella neoformans), this protein is Acireductone dioxygenase.